The primary structure comprises 102 residues: Small ribosomal subunit protein uS17 (102 aa).

Polar residues predominate over residues 1–15; sequence MTDETASQEASQSTD. The interval 1–20 is disordered; the sequence is MTDETASQEASQSTDAAAPA.

Belongs to the universal ribosomal protein uS17 family. As to quaternary structure, part of the 30S ribosomal subunit.

In terms of biological role, one of the primary rRNA binding proteins, it binds specifically to the 5'-end of 16S ribosomal RNA. This chain is Small ribosomal subunit protein uS17, found in Frankia casuarinae (strain DSM 45818 / CECT 9043 / HFP020203 / CcI3).